We begin with the raw amino-acid sequence, 149 residues long: MSESVQSNSAVLVHFTLKLDDGTTAESTRNNGKPALFRLGDASLSEGLEQHLLGLKVGDKTTFSLEPDAAFGVPSPDLIQYFSRREFMDAGEPEIGAIMLFTAMDGSEMPGVIREINGDSITVDFNHPLAGQTVHFDIEVLEIDPALEA.

The PPIase FKBP-type domain occupies 2-72 (SESVQSNSAV…FSLEPDAAFG (71 aa)).

Belongs to the FKBP-type PPIase family.

The enzyme catalyses [protein]-peptidylproline (omega=180) = [protein]-peptidylproline (omega=0). Functionally, PPIases accelerate the folding of proteins. Substrate specificity carried out with 'Suc-Ala-Xaa-Pro-Phe-4-nitroanilide', where Xaa is the amino acid tested, was found to be Phe &gt; Leu &gt;&gt; Ile &gt; Lys = Ala &gt; Trp &gt; His &gt;&gt; Gln. In Escherichia coli O6:H1 (strain CFT073 / ATCC 700928 / UPEC), this protein is FKBP-type 16 kDa peptidyl-prolyl cis-trans isomerase (fkpB).